Consider the following 249-residue polypeptide: Acetate transporter protein patA (249 aa).

6 consecutive transmembrane segments (helical) span residues 42–62, 71–91, 106–126, 141–161, 169–189, and 202–222; these read IGSP…TLSM, AITN…LVLV, VFGG…PAFG, AIGY…VAAM, GMLG…FSFA, and AAGA…GHLM.

This sequence belongs to the acetate uptake transporter (AceTr) (TC 2.A.96) family.

The protein localises to the endoplasmic reticulum membrane. It functions in the pathway mycotoxin biosynthesis; patulin biosynthesis. Its function is as follows. Acetate transporter protein; part of the gene cluster that mediates the biosynthesis of patulin, an acetate-derived tetraketide mycotoxin produced by several fungal species that shows antimicrobial properties against several bacteria. May be involved in the uptake of acetate, a substrate for the synthesis of 6-methylsalicylic acid by the polyketide synthase patK. This chain is Acetate transporter protein patA, found in Penicillium expansum (Blue mold rot fungus).